The primary structure comprises 120 residues: Large ribosomal subunit protein uL18 (120 aa).

It belongs to the universal ribosomal protein uL18 family. As to quaternary structure, part of the 50S ribosomal subunit; part of the 5S rRNA/L5/L18/L25 subcomplex. Contacts the 5S and 23S rRNAs.

Functionally, this is one of the proteins that bind and probably mediate the attachment of the 5S RNA into the large ribosomal subunit, where it forms part of the central protuberance. The sequence is that of Large ribosomal subunit protein uL18 from Rippkaea orientalis (strain PCC 8801 / RF-1) (Cyanothece sp. (strain PCC 8801)).